The sequence spans 248 residues: MALLEICCYSMECALTAQQNGADRIELCAAPKEGGLTPSLGVLRTVRQHVAIAVHPIIRPRGGDFCYTDGEFAAMLEDVRTVRELGFPGLVTGVLDVDGNVDLARMEKIMAAAGPLAVTFHRAFDMCANPFNALKNLADLGVARVLTSGQKSDAVHGLPIIMELIAQGDAPIIMAGAGVRSENLQRFLDAGVQEVHSSAGAWQASPMRYRNHGLSMSTDAQADEYSRYAVDGAAVAEMKGVIVRHQAN.

Belongs to the CutC family.

It localises to the cytoplasm. In Citrobacter koseri (strain ATCC BAA-895 / CDC 4225-83 / SGSC4696), this protein is PF03932 family protein CutC.